The primary structure comprises 498 residues: Heat stress transcription factor A-3 (498 aa).

Residues 156–180 (RRRSSPTQQSGLQPGSSGESGLDPE) are disordered. The segment covering 160–174 (SPTQQSGLQPGSSGE) has biased composition (polar residues). Residues 180-235 (ELNTLRREKSALLQEVTRLKQEHLQTIEQMSTLNQRLESAEDRQKQMVSFLAKLLQ) are a coiled coil. A hydrophobic repeat HR-A/B region spans residues 184–234 (LRREKSALLQEVTRLKQEHLQTIEQMSTLNQRLESAEDRQKQMVSFLAKLL). A Nuclear localization signal motif is present at residues 258–263 (KRKFLK). Residues 263–291 (KHVPHGNIDSGESSSQHTGESNLDFSPTS) are disordered. The segment covering 272 to 291 (SGESSSQHTGESNLDFSPTS) has biased composition (polar residues). Positions 309–316 (LEDGDLNL) match the Nuclear export signal motif. The segment at 356–382 (LEIPPASGPRGQDPTIGRSKGKNVLSP) is disordered.

It belongs to the HSF family. Class A subfamily. Homotrimer. In terms of processing, exhibits temperature-dependent phosphorylation.

The protein localises to the cytoplasm. It localises to the nucleus. In terms of biological role, transcriptional regulator that specifically binds DNA of heat shock promoter elements (HSE). This is Heat stress transcription factor A-3 (HSFA3) from Oryza sativa subsp. japonica (Rice).